The sequence spans 353 residues: B1 bradykinin receptor (353 aa).

Topologically, residues 1-40 are extracellular; it reads MASSWPPLELQSSNQSQLFPQNATACDNAPEAWDLLHRVL. 2 N-linked (GlcNAc...) asparagine glycosylation sites follow: Asn14 and Asn22. The chain crosses the membrane as a helical span at residues 41–64; it reads PTFIISICFFGLLGNLFVLLVFLL. Topologically, residues 65-73 are cytoplasmic; sequence PRRQLNVAE. The helical transmembrane segment at 74–98 threads the bilayer; it reads IYLANLAASDLVFVLGLPFWAENIW. At 99–111 the chain is on the extracellular side; the sequence is NQFNWPFGALLCR. The cysteines at positions 110 and 189 are disulfide-linked. Residues 112 to 133 form a helical membrane-spanning segment; sequence VINGVIKANLFISIFLVVAISQ. Over 134-155 the chain is Cytoplasmic; it reads DRYRVLVHPMASRRQQRRRQAR. Residues 156 to 178 traverse the membrane as a helical segment; that stretch reads VTCVLIWVVGGLLSIPTFLLRSI. Topologically, residues 179–199 are extracellular; sequence QAVPDLNITACILLLPHEAWH. N-linked (GlcNAc...) asparagine glycosylation occurs at Asn185. The chain crosses the membrane as a helical span at residues 200–226; that stretch reads FARIVELNILGFLLPLAAIVFFNYHIL. Topologically, residues 227 to 247 are cytoplasmic; sequence ASLRTREEVSRTRCGGRKDSK. Residues 248–272 form a helical membrane-spanning segment; the sequence is TTALILTLVVAFLVCWAPYHFFAFL. The Extracellular segment spans residues 273 to 291; that stretch reads EFLFQVQAVRGCFWEDFID. A helical membrane pass occupies residues 292–314; it reads LGLQLANFFAFTNSSLNPVIYVF. The Cytoplasmic segment spans residues 315–353; that stretch reads VGRLFRTKVWELYKQCTPKSLAPISSSHRKEIFQLFWRN. A lipid anchor (S-palmitoyl cysteine) is attached at Cys330.

This sequence belongs to the G-protein coupled receptor 1 family. Bradykinin receptor subfamily. BDKRB1 sub-subfamily.

Its subcellular location is the cell membrane. Its function is as follows. This is a receptor for bradykinin. Could be a factor in chronic pain and inflammation. The protein is B1 bradykinin receptor (BDKRB1) of Homo sapiens (Human).